The sequence spans 471 residues: tRNA(Ile)-lysidine synthase (471 aa).

27–32 (SGGPDS) lines the ATP pocket.

This sequence belongs to the tRNA(Ile)-lysidine synthase family.

It localises to the cytoplasm. It carries out the reaction cytidine(34) in tRNA(Ile2) + L-lysine + ATP = lysidine(34) in tRNA(Ile2) + AMP + diphosphate + H(+). Functionally, ligates lysine onto the cytidine present at position 34 of the AUA codon-specific tRNA(Ile) that contains the anticodon CAU, in an ATP-dependent manner. Cytidine is converted to lysidine, thus changing the amino acid specificity of the tRNA from methionine to isoleucine. The protein is tRNA(Ile)-lysidine synthase of Dehalococcoides mccartyi (strain CBDB1).